The following is an 80-amino-acid chain: MKSFLLIALVLFFLFVSYASAKKKCQLPSDVGKGKASFTRYYYNEESGKCETFIYGGVGGNSNNFLTKEDCCRECAQGSC.

Positions 1–21 are cleaved as a signal peptide; that stretch reads MKSFLLIALVLFFLFVSYASA. The 51-residue stretch at 25 to 75 folds into the BPTI/Kunitz inhibitor domain; it reads CQLPSDVGKGKASFTRYYYNEESGKCETFIYGGVGGNSNNFLTKEDCCREC. Intrachain disulfides connect cysteine 25–cysteine 75, cysteine 50–cysteine 71, and cysteine 72–cysteine 80.

It belongs to the venom Kunitz-type family. Scorpion delta-Ktx subfamily. Delta-Ktx 2 sub-subfamily. In terms of processing, lacks the conserved CysII-CysIV disulfide bond but contains 2 cysteine residues at the C-terminus that generate a new disulfide bond. In terms of tissue distribution, expressed by the venom gland.

Its subcellular location is the secreted. Its function is as follows. Serine protease inhibitor that inhibits trypsin at a molar ratio of 1:1 (Ki=140 nM). The sequence is that of Kunitz-type serine protease inhibitor LmKTT-1a from Lychas mucronatus (Chinese swimming scorpion).